A 445-amino-acid polypeptide reads, in one-letter code: tRNA modification GTPase MnmE (445 aa).

(6S)-5-formyl-5,6,7,8-tetrahydrofolate is bound by residues Arg-24, Glu-81, and Lys-121. The 152-residue stretch at 218-369 (GLTVVIAGPP…LLEALVGFAR (152 aa)) folds into the TrmE-type G domain. Residues 228–233 (NAGKST), 247–253 (SPHAGTT), 272–275 (DTAG), and 350–352 (SAR) contribute to the GTP site. 2 residues coordinate Mg(2+): Ser-232 and Thr-253. Residue Lys-445 participates in (6S)-5-formyl-5,6,7,8-tetrahydrofolate binding.

It belongs to the TRAFAC class TrmE-Era-EngA-EngB-Septin-like GTPase superfamily. TrmE GTPase family. In terms of assembly, homodimer. Heterotetramer of two MnmE and two MnmG subunits. It depends on K(+) as a cofactor.

Its subcellular location is the cytoplasm. Its function is as follows. Exhibits a very high intrinsic GTPase hydrolysis rate. Involved in the addition of a carboxymethylaminomethyl (cmnm) group at the wobble position (U34) of certain tRNAs, forming tRNA-cmnm(5)s(2)U34. The sequence is that of tRNA modification GTPase MnmE from Bradyrhizobium sp. (strain BTAi1 / ATCC BAA-1182).